A 191-amino-acid polypeptide reads, in one-letter code: MIGRITGTLAAKQPPQVLVDVNGVCYEIDVPMSTFYNLPGIGEKVALLTHLAIREDAHLLYGFGSEVERAAFRELLKVSGIGAKTALSVLSGLSVNDLSAAIAAQEIGRIVKVPGIGKKTAERLLLELKGKPVFAGALASVPSAGASDDVRQALLALGYNERETAATVRELPAGLAVGEAIRQALRALSRA.

A domain I region spans residues 1-64 (MIGRITGTLA…EDAHLLYGFG (64 aa)). Positions 65-138 (SEVERAAFRE…KGKPVFAGAL (74 aa)) are domain II. Positions 138-141 (LASV) are flexible linker. The domain III stretch occupies residues 142 to 191 (PSAGASDDVRQALLALGYNERETAATVRELPAGLAVGEAIRQALRALSRA).

This sequence belongs to the RuvA family. Homotetramer. Forms an RuvA(8)-RuvB(12)-Holliday junction (HJ) complex. HJ DNA is sandwiched between 2 RuvA tetramers; dsDNA enters through RuvA and exits via RuvB. An RuvB hexamer assembles on each DNA strand where it exits the tetramer. Each RuvB hexamer is contacted by two RuvA subunits (via domain III) on 2 adjacent RuvB subunits; this complex drives branch migration. In the full resolvosome a probable DNA-RuvA(4)-RuvB(12)-RuvC(2) complex forms which resolves the HJ.

The protein resides in the cytoplasm. In terms of biological role, the RuvA-RuvB-RuvC complex processes Holliday junction (HJ) DNA during genetic recombination and DNA repair, while the RuvA-RuvB complex plays an important role in the rescue of blocked DNA replication forks via replication fork reversal (RFR). RuvA specifically binds to HJ cruciform DNA, conferring on it an open structure. The RuvB hexamer acts as an ATP-dependent pump, pulling dsDNA into and through the RuvAB complex. HJ branch migration allows RuvC to scan DNA until it finds its consensus sequence, where it cleaves and resolves the cruciform DNA. This Thiobacillus denitrificans (strain ATCC 25259 / T1) protein is Holliday junction branch migration complex subunit RuvA.